Consider the following 329-residue polypeptide: Thioredoxin-like fold domain-containing protein MRL7L homolog, chloroplastic (329 aa).

Residues 1-46 (MALQSCCSSSASVPATCSALCLAEATRAASLFVRPRAAARRLVLAR) constitute a chloroplast transit peptide. The interval 58–91 (AVQLVLGGRARDDGSESESSDDEDDDEPMQMTDE) is disordered. Residues 72–85 (SESESSDDEDDDEP) are compositionally biased toward acidic residues.

It is found in the plastid. The protein localises to the chloroplast stroma. Plays an essential role in early steps of chloroplast development. Involved in the regulation of plastid gene expression. Required for the proper function of the plastid transcriptional machinery and protein accumulation in thylakoid membranes. May function as molecular chaperone to ensure proper organization of the nucleoids in chloroplasts. The sequence is that of Thioredoxin-like fold domain-containing protein MRL7L homolog, chloroplastic from Oryza sativa subsp. japonica (Rice).